We begin with the raw amino-acid sequence, 454 residues long: tRNA modification GTPase MnmE (454 aa).

Residues Arg-23, Glu-80, and Lys-120 each coordinate (6S)-5-formyl-5,6,7,8-tetrahydrofolate. The 162-residue stretch at Gly-216–Gly-377 folds into the TrmE-type G domain. Residue Asn-226 participates in K(+) binding. Residues Asn-226–Ser-231, Thr-245–Thr-251, Asp-270–Gly-273, Asn-335–Asp-338, and Ser-358–Arg-360 contribute to the GTP site. Ser-230 contacts Mg(2+). The K(+) site is built by Thr-245, Ile-247, and Thr-250. Thr-251 provides a ligand contact to Mg(2+). Residue Lys-454 participates in (6S)-5-formyl-5,6,7,8-tetrahydrofolate binding.

Belongs to the TRAFAC class TrmE-Era-EngA-EngB-Septin-like GTPase superfamily. TrmE GTPase family. Homodimer. Heterotetramer of two MnmE and two MnmG subunits. It depends on K(+) as a cofactor.

The protein resides in the cytoplasm. Exhibits a very high intrinsic GTPase hydrolysis rate. Involved in the addition of a carboxymethylaminomethyl (cmnm) group at the wobble position (U34) of certain tRNAs, forming tRNA-cmnm(5)s(2)U34. In Serratia proteamaculans (strain 568), this protein is tRNA modification GTPase MnmE.